A 489-amino-acid polypeptide reads, in one-letter code: Ubiquitin-like-specific protease ESD4 (489 aa).

The tract at residues 43-66 (AMSEDSGKPASSNPTISRISRYPD) is disordered. Over residues 51 to 60 (PASSNPTISR) the composition is skewed to polar residues. Positions 200–223 (ASSLEAYRKLMQSAEKRNSKLEAL) form a coiled coil. Residues His380, Asp397, and Cys448 contribute to the active site.

The protein belongs to the peptidase C48 family. In terms of assembly, interacts with NUA (via N-terminus). Interacts with KIN10. Expressed in seedlings, leaves, shoots, flowers and roots.

Its subcellular location is the nucleus membrane. It carries out the reaction Hydrolysis of the alpha-linked peptide bond in the sequence Gly-Gly-|-Ala-Thr-Tyr at the C-terminal end of the small ubiquitin-like modifier (SUMO) propeptide, Smt3, leading to the mature form of the protein. A second reaction involves the cleavage of an epsilon-linked peptide bond between the C-terminal glycine of the mature SUMO and the lysine epsilon-amino group of the target protein.. Inhibited by thiol reagent and N-ethylmaleimide, but not by ubiquitin aldehyde, pepstatin A or benzamidine HCl. Its function is as follows. Protease that catalyzes two essential functions in the SUMO pathway: processing of full-length SUMOs to their mature forms and deconjugation of SUMO from targeted proteins. Cleaves precursors of SUM1 and SUM2, but not of SUM3 or SUM5. Able to release SUM1 and SUM2 from conjugates, but unable to cleave SUM3. Acts predominantly as an isopeptidase, cleaving SUMO-conjugated proteins better than SUMO peptides. Plays an important role in the control of flowering time. The polypeptide is Ubiquitin-like-specific protease ESD4 (ESD4) (Arabidopsis thaliana (Mouse-ear cress)).